Consider the following 538-residue polypeptide: Chaperonin GroEL (538 aa).

ATP is bound by residues Thr-30–Pro-33, Asp-87–Thr-91, Gly-415, Asp-479–Ala-481, and Asp-495.

The protein belongs to the chaperonin (HSP60) family. Forms a cylinder of 14 subunits composed of two heptameric rings stacked back-to-back. Interacts with the co-chaperonin GroES.

The protein localises to the cytoplasm. It catalyses the reaction ATP + H2O + a folded polypeptide = ADP + phosphate + an unfolded polypeptide.. Functionally, together with its co-chaperonin GroES, plays an essential role in assisting protein folding. The GroEL-GroES system forms a nano-cage that allows encapsulation of the non-native substrate proteins and provides a physical environment optimized to promote and accelerate protein folding. This is Chaperonin GroEL from Dictyoglomus turgidum (strain DSM 6724 / Z-1310).